We begin with the raw amino-acid sequence, 428 residues long: Glutamate-1-semialdehyde 2,1-aminomutase 1 (428 aa).

The residue at position 267 (Lys267) is an N6-(pyridoxal phosphate)lysine.

This sequence belongs to the class-III pyridoxal-phosphate-dependent aminotransferase family. HemL subfamily. In terms of assembly, homodimer. Pyridoxal 5'-phosphate serves as cofactor.

Its subcellular location is the cytoplasm. It catalyses the reaction (S)-4-amino-5-oxopentanoate = 5-aminolevulinate. It functions in the pathway porphyrin-containing compound metabolism; protoporphyrin-IX biosynthesis; 5-aminolevulinate from L-glutamyl-tRNA(Glu): step 2/2. This chain is Glutamate-1-semialdehyde 2,1-aminomutase 1 (hemL1), found in Staphylococcus aureus (strain NCTC 8325 / PS 47).